Consider the following 224-residue polypeptide: Ribonuclease HII (224 aa).

The 210-residue stretch at methionine 1–arginine 210 folds into the RNase H type-2 domain. Positions 7, 8, and 105 each coordinate a divalent metal cation.

This sequence belongs to the RNase HII family. Requires Mn(2+) as cofactor. Mg(2+) is required as a cofactor.

It localises to the cytoplasm. The catalysed reaction is Endonucleolytic cleavage to 5'-phosphomonoester.. Its function is as follows. Endonuclease that specifically degrades the RNA of RNA-DNA hybrids. In Pyrococcus abyssi (strain GE5 / Orsay), this protein is Ribonuclease HII (rnhB).